Reading from the N-terminus, the 343-residue chain is Thiamine thiazole synthase 4, chloroplastic (343 aa).

Substrate contacts are provided by residues alanine 89, 109–110 (EQ), glycine 117, and alanine 182. Cysteine 211 bears the 2,3-didehydroalanine (Cys) mark. Residues aspartate 213, histidine 228, methionine 280, and 290–292 (RMG) contribute to the substrate site.

It belongs to the THI4 family. In terms of assembly, homooctamer. Fe cation serves as cofactor. Post-translationally, during the catalytic reaction, a sulfide is transferred from Cys-211 to a reaction intermediate, generating a dehydroalanine residue.

It is found in the plastid. The protein localises to the chloroplast. The enzyme catalyses [ADP-thiazole synthase]-L-cysteine + glycine + NAD(+) = [ADP-thiazole synthase]-dehydroalanine + ADP-5-ethyl-4-methylthiazole-2-carboxylate + nicotinamide + 3 H2O + 2 H(+). Functionally, involved in biosynthesis of the thiamine precursor thiazole. Catalyzes the conversion of NAD and glycine to adenosine diphosphate 5-(2-hydroxyethyl)-4-methylthiazole-2-carboxylic acid (ADT), an adenylated thiazole intermediate. The reaction includes an iron-dependent sulfide transfer from a conserved cysteine residue of the protein to a thiazole intermediate. The enzyme can only undergo a single turnover, which suggests it is a suicide enzyme. May have additional roles in adaptation to various stress conditions and in DNA damage tolerance. This Physcomitrium patens (Spreading-leaved earth moss) protein is Thiamine thiazole synthase 4, chloroplastic.